Consider the following 967-residue polypeptide: Leucine--tRNA ligase (967 aa).

The 'HIGH' region motif lies at 43 to 53; the sequence is PYLSGHLHVGH. The short motif at 650 to 654 is the 'KMSKS' region element; it reads KMSKS. Residue Lys-653 coordinates ATP.

It belongs to the class-I aminoacyl-tRNA synthetase family.

It localises to the cytoplasm. It carries out the reaction tRNA(Leu) + L-leucine + ATP = L-leucyl-tRNA(Leu) + AMP + diphosphate. In Pyrococcus abyssi (strain GE5 / Orsay), this protein is Leucine--tRNA ligase.